Reading from the N-terminus, the 539-residue chain is E3 ubiquitin-protein ligase arc-1 (539 aa).

Residues 6–53 (CNVCNEEYSARDPLKCPRVLTGCGHTICHNCAISIAGRNSSIFCPFDR) form an RING-type zinc finger. The B box-type zinc finger occupies 103 to 149 (LLNLECDEDSEHVAVIYCTVCDSNLCERCSESTHSTNVLSKHRRIPL). An ARF-like region spans residues 369 to 539 (ESRVVLLGLD…LSRLNGTCPV (171 aa)). Residues 376-383 (GLDGAGKT), 422-426 (DVGGL), and 481-484 (NRKD) each bind GTP.

The protein in the C-terminal section; belongs to the small GTPase superfamily. Arf family.

The enzyme catalyses S-ubiquitinyl-[E2 ubiquitin-conjugating enzyme]-L-cysteine + [acceptor protein]-L-lysine = [E2 ubiquitin-conjugating enzyme]-L-cysteine + N(6)-ubiquitinyl-[acceptor protein]-L-lysine.. It functions in the pathway protein modification; protein ubiquitination. Its function is as follows. Acts as an E3 ubiquitin-protein ligase. This Caenorhabditis elegans protein is E3 ubiquitin-protein ligase arc-1 (arc-1).